A 295-amino-acid chain; its full sequence is Protein shisa-2 homolog (295 aa).

The signal sequence occupies residues 1–33 (MWGARRSSVSSSWNAASLLQLLLAALLAAGARA). At 34 to 110 (SGEYCHGWLD…RADKDGPDGS (77 aa)) the chain is on the extracellular side. Residues 87–108 (GCDNDRQQGAGEPGRADKDGPD) are disordered. The helical transmembrane segment at 111-131 (AVPIYVPFLIVGSVFVAFIIL) threads the bilayer. Residues 132 to 295 (GSLVAACCCR…EQKMYPAVTV (164 aa)) are Cytoplasmic-facing. The interval 168–205 (PSASTSRGSSSRQSSTAASSSSSANSGARAPPTRSQTN) is disordered. Positions 169–197 (SASTSRGSSSRQSSTAASSSSSANSGARA) are enriched in low complexity.

Belongs to the shisa family.

Its subcellular location is the endoplasmic reticulum membrane. Functionally, plays an essential role in the maturation of presomitic mesoderm cells by individual attenuation of both FGF and WNT signaling. In Homo sapiens (Human), this protein is Protein shisa-2 homolog (SHISA2).